Consider the following 254-residue polypeptide: Ribosomal RNA small subunit methyltransferase J (254 aa).

S-adenosyl-L-methionine contacts are provided by residues 107–108 (RD), 123–124 (ER), and Asp177.

This sequence belongs to the methyltransferase superfamily. RsmJ family.

Its subcellular location is the cytoplasm. The catalysed reaction is guanosine(1516) in 16S rRNA + S-adenosyl-L-methionine = N(2)-methylguanosine(1516) in 16S rRNA + S-adenosyl-L-homocysteine + H(+). In terms of biological role, specifically methylates the guanosine in position 1516 of 16S rRNA. The sequence is that of Ribosomal RNA small subunit methyltransferase J from Histophilus somni (strain 2336) (Haemophilus somnus).